The following is a 1113-amino-acid chain: MFSQVPRTPASGCYYLNSMTPEGQEMYLRFDQTTRRSPYRMSRILARHQLVTKIQQEIEAKEACDWLRAAGFPQYAQLYEDSQFPINIVAVKNDHDFLEKDLVEPLCRRLNTLNKCASMKLDVNFQRKKGDDSDEEDLCISNKWTFQRTSRRWSRVDDLYTLLPRGDRNGSPGGTGMRNTTSSESVLTDLSEPEVCSIHSESSGGSDSRSQPGQCCTDNPVMLDAPLVSSSLPQPPRDVLNHPFHPKNEKPTRARAKSFLKRMETLRGKGAHGRHKGSGRTGGLVISGPMLQQEPESFKAMQCIQIPNGDLQNSPPPACRKGLPCSGKSSGESSPSEHSSSGVSTPCLKERKCHEANKRGGMYLEDLDVLAGTALPDAGDQSRMHEFHSQENLVVHIPKDHKPGTFPKALSIESLSPTDSSNGVNWRTGSISLGREQVPGAREPRLMASCHRASRVSIYDNVPGSHLYASTGDLLDLEKDDLFPHLDDILQHVNGLQEVVDDWSKDVLPELQTHDTLVGEPGLSTFPSPNQITLDFEGNSVSEGRTTPSDVERDVTSLNESEPPGVRDRRDSGVGASLTRPNRRLRWNSFQLSHQPRPAPASPHISSQTASQLSLLQRFSLLRLTAIMEKHSMSNKHGWTWSVPKFMKRMKVPDYKDKAVFGVPLIVHVQRTGQPLPQSIQQALRYLRSNCLDQVGLFRKSGVKSRIHALRQMNENFPENVNYEDQSAYDVADMVKQFFRDLPEPLFTNKLSETFLHIYQYVSKEQRLQAVQAAILLLADENREVLQTLLCFLNDVVNLVEENQMTPMNLAVCLAPSLFHLNLLKKESSPRVIQKKYATGKPDQKDLNENLAAAQGLAHMIMECDRLFEVPHELVAQSRNSYVEAEIHVPTLEELGTQLEESGATFHTYLNHLIQGLQKEAKEKFKGWVTCSSTDNTDLAFKKVGDGNPLKLWKASVEVEAPPSVVLNRVLRERHLWDEDFVQWKVVETLDRQTEIYQYVLNSMAPHPSRDFVVLRTWKTDLPKGMCTLVSLSVEHEEAQLLGGVRAVVMDSQYLIEPCGSGKSRLTHICRIDLKGHSPEWYSKGFGHLCAAEVARIRNSFQPLIAEGPETKI.

An N-acetylmethionine modification is found at Met1. Positions 55–122 (QQEIEAKEAC…LNKCASMKLD (68 aa)) constitute an SAM domain. Disordered regions lie at residues 162–254 (LLPR…PTRA) and 307–346 (PNGD…VSTP). A compositionally biased stretch (polar residues) spans 177 to 188 (MRNTTSSESVLT). Low complexity-rich tracts occupy residues 197–213 (SIHS…SQPG) and 326–344 (SGKS…SGVS). Ser411 carries the phosphoserine modification. Positions 536 to 549 (FEGNSVSEGRTTPS) are enriched in polar residues. The interval 536–580 (FEGNSVSEGRTTPSDVERDVTSLNESEPPGVRDRRDSGVGASLTR) is disordered. Positions 663–868 (VPLIVHVQRT…HMIMECDRLF (206 aa)) constitute a Rho-GAP domain. Positions 899–1107 (LEESGATFHT…RNSFQPLIAE (209 aa)) constitute an START domain.

In terms of assembly, homodimer. Interacts with TAX1BP1. Ubiquitously expressed. Underexpressed in hepatocellular carcinoma cells and some breast cancer cell lines.

Its subcellular location is the cytoplasm. It localises to the membrane. The protein localises to the mitochondrion membrane. It is found in the lipid droplet. GTPase-activating protein for RhoA, and perhaps for Cdc42. May be involved in regulation of cytoskeletal reorganization, cell proliferation and cell motility. Acts a tumor suppressor in hepatocellular carcinoma cells. This Homo sapiens (Human) protein is StAR-related lipid transfer protein 13 (STARD13).